The sequence spans 423 residues: Cyclin-dependent kinase 14 (423 aa).

Residues Ser-32, Ser-49, and Ser-88 each carry the phosphoserine modification. Polar residues predominate over residues 49–64 (SENNACINFKTSSTGK). The segment at 49-87 (SENNACINFKTSSTGKESPKVRRHSSPSSPTSPKFGKAD) is disordered. The region spanning 89–373 (YEKLEKLGEG…AQAALSHEYF (285 aa)) is the Protein kinase domain. ATP is bound by residues 95–103 (LGEGSYATV) and Lys-118. Asp-210 (proton acceptor) is an active-site residue. Positions 403–423 (ESMRAFGKNNSYGKSLSNSKH) are disordered. The segment covering 410–423 (KNNSYGKSLSNSKH) has biased composition (polar residues).

The protein belongs to the protein kinase superfamily. CMGC Ser/Thr protein kinase family. CDC2/CDKX subfamily. Found in a complex with LRP6, CCNY and CAPRIN2 during G2/M stage; CAPRIN2 functions as a scaffold for the complex by binding to CCNY via its N terminus and to CDK14 via its C terminus. Interacts with CCNY; CCNY mediates its recruitment to the plasma membrane and promotes phosphorylation of LRP6. Interacts with CCDN3 and CDKN1A. Interacts with SEPT8. Interacts with 14-3-3 proteina YWHAB, YWHAE, YWHAH and YWHAQ.

It is found in the cell membrane. Its subcellular location is the cytoplasm. It localises to the nucleus. The catalysed reaction is L-seryl-[protein] + ATP = O-phospho-L-seryl-[protein] + ADP + H(+). It carries out the reaction L-threonyl-[protein] + ATP = O-phospho-L-threonyl-[protein] + ADP + H(+). Serine/threonine-protein kinase activity is promoted by associated cyclins CCDN3 and CCNY and repressed by CDKN1A. Functionally, serine/threonine-protein kinase involved in the control of the eukaryotic cell cycle, whose activity is controlled by an associated cyclin. Acts as a cell-cycle regulator of Wnt signaling pathway during G2/M phase by mediating the phosphorylation of LRP6 at 'Ser-1490', leading to the activation of the Wnt signaling pathway. Acts as a regulator of cell cycle progression and cell proliferation via its interaction with CCDN3. Phosphorylates RB1 in vitro, however the relevance of such result remains to be confirmed in vivo. May also play a role in meiosis, neuron differentiation and may indirectly act as a negative regulator of insulin-responsive glucose transport. The polypeptide is Cyclin-dependent kinase 14 (CDK14) (Callithrix jacchus (White-tufted-ear marmoset)).